Consider the following 396-residue polypeptide: NADH-quinone oxidoreductase subunit D (396 aa).

This sequence belongs to the complex I 49 kDa subunit family. NDH-1 is composed of 14 different subunits. Subunits NuoB, C, D, E, F, and G constitute the peripheral sector of the complex.

It localises to the cell inner membrane. It carries out the reaction a quinone + NADH + 5 H(+)(in) = a quinol + NAD(+) + 4 H(+)(out). In terms of biological role, NDH-1 shuttles electrons from NADH, via FMN and iron-sulfur (Fe-S) centers, to quinones in the respiratory chain. The immediate electron acceptor for the enzyme in this species is believed to be ubiquinone. Couples the redox reaction to proton translocation (for every two electrons transferred, four hydrogen ions are translocated across the cytoplasmic membrane), and thus conserves the redox energy in a proton gradient. The chain is NADH-quinone oxidoreductase subunit D from Brucella suis biovar 1 (strain 1330).